A 325-amino-acid chain; its full sequence is Small ribosomal subunit protein uS2 (325 aa).

The segment covering 212 to 226 has biased composition (basic and acidic residues); the sequence is KEEQAKAEAERERLA. The tract at residues 212–325 is disordered; the sequence is KEEQAKAEAE…TEPKASTGNW (114 aa). 2 stretches are compositionally biased toward low complexity: residues 234-247 and 261-289; these read QPAA…QWAD and PVTT…TGSG. Polar residues predominate over residues 290-300; the sequence is FNQDDWSVPTT.

This sequence belongs to the universal ribosomal protein uS2 family. Component of the small ribosomal subunit. Mature ribosomes consist of a small (40S) and a large (60S) subunit. The 40S subunit contains about 33 different proteins and 1 molecule of RNA (18S). The 60S subunit contains about 49 different proteins and 3 molecules of RNA (28S, 5.8S and 5S). Interacts with ribosomal protein S21.

The protein localises to the cytoplasm. Its function is as follows. Required for the assembly and/or stability of the 40S ribosomal subunit. Required for the processing of the 20S rRNA-precursor to mature 18S rRNA in a late step of the maturation of 40S ribosomal subunits. The chain is Small ribosomal subunit protein uS2 from Suberites domuncula (Sponge).